Here is a 422-residue protein sequence, read N- to C-terminus: SH2 domain-containing protein 4A (422 aa).

Phosphoserine is present on residues serine 117 and serine 123. Disordered regions lie at residues 141-190 and 202-282; these read PQNV…EDEK and SEWQ…VIRT. 2 stretches are compositionally biased toward basic and acidic residues: residues 163–190 and 212–231; these read TKKD…EDEK and KAAD…DYKR. The residue at position 233 (serine 233) is a Phosphoserine. The region spanning 316–408 is the SH2 domain; sequence WFHGILTLKK…LGKELLLFPC (93 aa).

As to quaternary structure, interacts with ESR1.

Its subcellular location is the cytoplasm. Its function is as follows. Inhibits estrogen-induced cell proliferation by competing with PLCG for binding to ESR1, blocking the effect of estrogen on PLCG and repressing estrogen-induced proliferation. May play a role in T-cell development and function. This is SH2 domain-containing protein 4A (Sh2d4a) from Rattus norvegicus (Rat).